Consider the following 54-residue polypeptide: Large ribosomal subunit protein bL32c (54 aa).

This sequence belongs to the bacterial ribosomal protein bL32 family.

It localises to the plastid. Its subcellular location is the chloroplast. This Cucumis sativus (Cucumber) protein is Large ribosomal subunit protein bL32c.